A 446-amino-acid chain; its full sequence is Lysine histidine transporter 1 (446 aa).

Residues 1–37 are Cytoplasmic-facing; the sequence is MVAQAPHDDHQDDEKLAAARQKEIEDWLPITSSRNAK. The helical transmembrane segment at 38–58 threads the bilayer; it reads WWYSAFHNVTAMVGAGVLGLP. The Extracellular portion of the chain corresponds to 59–63; that stretch reads YAMSQ. Residues 64-84 form a helical membrane-spanning segment; the sequence is LGWGPGIAVLVLSWVITLYTL. Over 85–115 the chain is Cytoplasmic; it reads WQMVEMHEMVPGKRFDRYHELGQHAFGEKLG. Residues 116–136 form a helical membrane-spanning segment; that stretch reads LYIVVPQQLIVEIGVCIVYMV. The Extracellular portion of the chain corresponds to 137-157; sequence TGGKSLKKFHELVCDDCKPIK. A helical transmembrane segment spans residues 158-178; the sequence is LTYFIMIFASVHFVLSHLPNF. Topologically, residues 179–180 are cytoplasmic; it reads NS. A helical membrane pass occupies residues 181–201; that stretch reads ISGVSLAAAVMSLSYSTIAWA. Residues 202–227 are Extracellular-facing; the sequence is SSASKGVQEDVQYGYKAKTTAGTVFN. A helical membrane pass occupies residues 228–248; the sequence is FFSGLGDVAFAYAGHNVVLEI. Topologically, residues 249–268 are cytoplasmic; the sequence is QATIPSTPEKPSKGPMWRGV. The chain crosses the membrane as a helical span at residues 269 to 289; the sequence is IVAYIVVALCYFPVALVGYYI. Over 290–305 the chain is Extracellular; the sequence is FGNGVEDNILMSLKKP. Residues 306–326 traverse the membrane as a helical segment; sequence AWLIATANIFVVIHVIGSYQI. At 327-352 the chain is on the cytoplasmic side; the sequence is YAMPVFDMMETLLVKKLNFRPTTTLR. The helical transmembrane segment at 353-375 threads the bilayer; the sequence is FFVRNFYVAATMFVGMTFPFFGG. At 376–378 the chain is on the extracellular side; sequence LLA. Residues 379-401 traverse the membrane as a helical segment; the sequence is FFGGFAFAPTTYFLPCVIWLAIY. At 402 to 409 the chain is on the cytoplasmic side; that stretch reads KPKKYSLS. The chain crosses the membrane as a helical span at residues 410 to 430; it reads WWANWVCIVFGLFLMVLSPIG. The Extracellular segment spans residues 431-446; that stretch reads GLRTIVIQAKGYKFYS.

The protein belongs to the amino acid/polyamine transporter 2 family. Amino acid/auxin permease (AAAP) (TC 2.A.18.2) subfamily. As to expression, expressed in roots, stems, flowers, leaves, siliques and pollen. Found in the tips of roots and in the rhizodermis of emerging roots and in lateral roots. Higher expression in older leaves as compared to joung leaves. Detected first at the hydathodes, then in the epidermis and finally in matures leaves in all mesophyll cells. Not detected in vascular bundles or in seeds.

It is found in the cell membrane. With respect to regulation, inhibited by carbonlycyanide m-chlorophenylhydrazone (CCCP) and DEPC. Amino acid-proton symporter. Transporter with a broad specificity for histidine, lysine, glutamic acid, alanine, serine, proline and glycine. Involved in both apoplastic transport of amino acids in leaves and their uptake by roots. This Arabidopsis thaliana (Mouse-ear cress) protein is Lysine histidine transporter 1 (LHT1).